The following is a 54-amino-acid chain: UPF0181 protein PM0480 (54 aa).

It belongs to the UPF0181 family.

The chain is UPF0181 protein PM0480 from Pasteurella multocida (strain Pm70).